We begin with the raw amino-acid sequence, 452 residues long: Retinoid-inducible serine carboxypeptidase (452 aa).

An N-terminal signal peptide occupies residues 1 to 28; it reads MELSRRICLVRLWLLLLSFLLGFSAGSA. N-linked (GlcNAc...) asparagine glycosylation is found at Asn-64, Asn-102, and Asn-126. Ser-167 is a catalytic residue. N-linked (GlcNAc...) asparagine glycosylation is found at Asn-192 and Asn-362. Residues Asp-371 and His-431 contribute to the active site.

Belongs to the peptidase S10 family.

Its subcellular location is the secreted. Its function is as follows. May be involved in vascular wall and kidney homeostasis. This Mus musculus (Mouse) protein is Retinoid-inducible serine carboxypeptidase (Scpep1).